A 541-amino-acid polypeptide reads, in one-letter code: Glucose-6-phosphate isomerase (541 aa).

E346 acts as the Proton donor in catalysis. Residues H377 and K506 contribute to the active site.

This sequence belongs to the GPI family.

The protein resides in the cytoplasm. The catalysed reaction is alpha-D-glucose 6-phosphate = beta-D-fructose 6-phosphate. It participates in carbohydrate biosynthesis; gluconeogenesis. The protein operates within carbohydrate degradation; glycolysis; D-glyceraldehyde 3-phosphate and glycerone phosphate from D-glucose: step 2/4. Catalyzes the reversible isomerization of glucose-6-phosphate to fructose-6-phosphate. The sequence is that of Glucose-6-phosphate isomerase from Agrobacterium fabrum (strain C58 / ATCC 33970) (Agrobacterium tumefaciens (strain C58)).